The following is a 567-amino-acid chain: Probable E3 ubiquitin-protein ligase ARI8 (567 aa).

Residues 1 to 27 (MEADDDFYSGTENYSDYADSDEDDADG) form a disordered region. A compositionally biased stretch (acidic residues) spans 18-27 (ADSDEDDADG). A TRIAD supradomain region spans residues 124–337 (GELDCGICFE…GGFYACNRYE (214 aa)). Zn(2+)-binding residues include Cys128, Cys131, Cys145, His147, Cys150, Cys153, Cys173, Cys178, Cys217, Cys222, Cys239, Cys241, Cys246, Cys249, His254, Cys259, Cys286, and Cys289. Residues 128-178 (CGICFETFLSDKLHAAACGHPFCDSCWEGYITTAINDGPGCLTLRCPDPSC) form an RING-type 1 zinc finger. Residues 197-259 (QKYTSYFVRS…AEEAHRPVDC (63 aa)) form an IBR-type zinc finger. The RING-type 2; atypical zinc finger occupies 286–316 (CPKCKRPIEKNQGCMHITCTPPCKFEFCWLC). Cys299 is a catalytic residue. Zn(2+) is bound by residues Cys304, Cys308, Cys313, Cys316, His323, and Cys333. Residues 514–543 (DAYDRTSSSKSLGGKTKGSSSKASSSDSSH) are disordered. Low complexity predominate over residues 521–542 (SSKSLGGKTKGSSSKASSSDSS). A RanBP2-type zinc finger spans residues 540 to 567 (DSSHWPCEYCTYVNPRSTTICQMCEHGR).

Belongs to the RBR family. Ariadne subfamily. It depends on Zn(2+) as a cofactor. In terms of tissue distribution, ubiquitous.

It catalyses the reaction [E2 ubiquitin-conjugating enzyme]-S-ubiquitinyl-L-cysteine + [acceptor protein]-L-lysine = [E2 ubiquitin-conjugating enzyme]-L-cysteine + [acceptor protein]-N(6)-ubiquitinyl-L-lysine.. It participates in protein modification; protein ubiquitination. Its function is as follows. Might act as an E3 ubiquitin-protein ligase, or as part of E3 complex, which accepts ubiquitin from specific E2 ubiquitin-conjugating enzymes and then transfers it to substrates. This is Probable E3 ubiquitin-protein ligase ARI8 (ARI8) from Arabidopsis thaliana (Mouse-ear cress).